We begin with the raw amino-acid sequence, 332 residues long: Glycerol-3-phosphate dehydrogenase [NAD(P)+] (332 aa).

4 residues coordinate NADPH: S11, F12, K32, and K106. 3 residues coordinate sn-glycerol 3-phosphate: K106, G137, and S139. A141 provides a ligand contact to NADPH. Positions 192, 245, 255, 256, and 257 each coordinate sn-glycerol 3-phosphate. Residue K192 is the Proton acceptor of the active site. NADPH is bound at residue R256. NADPH is bound by residues V280 and E282.

It belongs to the NAD-dependent glycerol-3-phosphate dehydrogenase family.

It localises to the cytoplasm. It carries out the reaction sn-glycerol 3-phosphate + NAD(+) = dihydroxyacetone phosphate + NADH + H(+). The enzyme catalyses sn-glycerol 3-phosphate + NADP(+) = dihydroxyacetone phosphate + NADPH + H(+). It functions in the pathway membrane lipid metabolism; glycerophospholipid metabolism. Its function is as follows. Catalyzes the reduction of the glycolytic intermediate dihydroxyacetone phosphate (DHAP) to sn-glycerol 3-phosphate (G3P), the key precursor for phospholipid synthesis. In Staphylococcus epidermidis (strain ATCC 12228 / FDA PCI 1200), this protein is Glycerol-3-phosphate dehydrogenase [NAD(P)+].